The primary structure comprises 359 residues: Histamine H2 receptor (359 aa).

Topologically, residues 1–22 (MISNGTGSSFCLDSPPCRITVS) are extracellular. N-linked (GlcNAc...) asparagine glycosylation is present at asparagine 4. The chain crosses the membrane as a helical span at residues 23–44 (VVLTVLILITIAGNVVVCLAVG). Topologically, residues 45 to 57 (LNRRLRSLTNCFI) are cytoplasmic. A helical transmembrane segment spans residues 58 to 81 (VSLAITDLLLGLLVLPFSAFYQLS). Residues 82-92 (CRWSFGKVFCN) lie on the Extracellular side of the membrane. A disulfide bridge links cysteine 91 with cysteine 174. Residues 93–114 (IYTSLDVMLCTASILNLFMISL) traverse the membrane as a helical segment. Over 115-134 (DRYCAVTDPLRYPVLITPVR) the chain is Cytoplasmic. The helical transmembrane segment at 135-159 (VAVSLVLIWVISITLSFLSIHLGWN) threads the bilayer. At 160–180 (SRNETSSFNHTIPKCKVQVNL) the chain is on the extracellular side. Residues 181–204 (VYGLVDGLVTFYLPLLVMCITYYR) form a helical membrane-spanning segment. At 205–234 (IFKIARDQAKRIHHMGSWKAATIGEHKATV) the chain is on the cytoplasmic side. A helical transmembrane segment spans residues 235–258 (TLAAVMGAFIICWFPYFTVFVYRG). At 259 to 267 (LKGDDAINE) the chain is on the extracellular side. A helical membrane pass occupies residues 268-289 (AFEAVVLWLGYANSALNPILYA). The Cytoplasmic segment spans residues 290–359 (TLNRDFRTAY…VTAPRGATDR (70 aa)). Residue cysteine 305 is the site of S-palmitoyl cysteine attachment. Positions 310 to 327 (HNAQETSLRSNSSQLARN) are enriched in polar residues. The tract at residues 310 to 359 (HNAQETSLRSNSSQLARNQSREPMRQEEKPLKLQVWSGTEVTAPRGATDR) is disordered. The segment covering 328-340 (QSREPMRQEEKPL) has biased composition (basic and acidic residues).

The protein belongs to the G-protein coupled receptor 1 family. In terms of tissue distribution, gastric fundus and, to a lesser extent, in brain.

It localises to the cell membrane. Its function is as follows. The H2 subclass of histamine receptors mediates gastric acid secretion. The activity of this receptor is mediated by G proteins which activate adenylyl cyclase. The chain is Histamine H2 receptor (HRH2) from Canis lupus familiaris (Dog).